The sequence spans 160 residues: Transcription antitermination protein NusB (160 aa).

Belongs to the NusB family.

In terms of biological role, involved in transcription antitermination. Required for transcription of ribosomal RNA (rRNA) genes. Binds specifically to the boxA antiterminator sequence of the ribosomal RNA (rrn) operons. This chain is Transcription antitermination protein NusB, found in Rhizobium johnstonii (strain DSM 114642 / LMG 32736 / 3841) (Rhizobium leguminosarum bv. viciae).